A 156-amino-acid polypeptide reads, in one-letter code: Small ribosomal subunit protein uS7 (156 aa).

The protein belongs to the universal ribosomal protein uS7 family. As to quaternary structure, part of the 30S ribosomal subunit. Contacts proteins S9 and S11.

Functionally, one of the primary rRNA binding proteins, it binds directly to 16S rRNA where it nucleates assembly of the head domain of the 30S subunit. Is located at the subunit interface close to the decoding center, probably blocks exit of the E-site tRNA. The polypeptide is Small ribosomal subunit protein uS7 (Methylorubrum populi (strain ATCC BAA-705 / NCIMB 13946 / BJ001) (Methylobacterium populi)).